The following is a 492-amino-acid chain: 3-octaprenyl-4-hydroxybenzoate carboxy-lyase (492 aa).

A Mn(2+)-binding site is contributed by N175. Residues 178–180 (IYR), 192–194 (RWL), and 197–198 (RG) contribute to the prenylated FMN site. Residue E241 participates in Mn(2+) binding. D290 acts as the Proton donor in catalysis.

This sequence belongs to the UbiD family. In terms of assembly, homohexamer. Requires prenylated FMN as cofactor. Mn(2+) is required as a cofactor.

It is found in the cell membrane. The enzyme catalyses a 4-hydroxy-3-(all-trans-polyprenyl)benzoate + H(+) = a 2-(all-trans-polyprenyl)phenol + CO2. The protein operates within cofactor biosynthesis; ubiquinone biosynthesis. Catalyzes the decarboxylation of 3-octaprenyl-4-hydroxy benzoate to 2-octaprenylphenol, an intermediate step in ubiquinone biosynthesis. The protein is 3-octaprenyl-4-hydroxybenzoate carboxy-lyase of Salmonella choleraesuis (strain SC-B67).